We begin with the raw amino-acid sequence, 143 residues long: Peptidyl-prolyl cis-trans isomerase FKBP15-3 (143 aa).

One can recognise a PPIase FKBP-type domain in the interval G56–K143.

This sequence belongs to the FKBP-type PPIase family.

The catalysed reaction is [protein]-peptidylproline (omega=180) = [protein]-peptidylproline (omega=0). PPIases accelerate the folding of proteins. It catalyzes the cis-trans isomerization of proline imidic peptide bonds in oligopeptides. The protein is Peptidyl-prolyl cis-trans isomerase FKBP15-3 (FKBP15-3) of Arabidopsis thaliana (Mouse-ear cress).